Here is an 89-residue protein sequence, read N- to C-terminus: Small ribosomal subunit protein uS15 (89 aa).

Belongs to the universal ribosomal protein uS15 family. In terms of assembly, part of the 30S ribosomal subunit. Forms a bridge to the 50S subunit in the 70S ribosome, contacting the 23S rRNA.

One of the primary rRNA binding proteins, it binds directly to 16S rRNA where it helps nucleate assembly of the platform of the 30S subunit by binding and bridging several RNA helices of the 16S rRNA. Functionally, forms an intersubunit bridge (bridge B4) with the 23S rRNA of the 50S subunit in the ribosome. The sequence is that of Small ribosomal subunit protein uS15 from Parabacteroides distasonis (strain ATCC 8503 / DSM 20701 / CIP 104284 / JCM 5825 / NCTC 11152).